The primary structure comprises 138 residues: Acidic phospholipase A2 2 (138 aa).

A signal peptide spans 1-16 (MRTLWIVAVLLLGVEG). 7 cysteine pairs are disulfide-bonded: C42–C131, C44–C60, C59–C111, C65–C138, C66–C104, C73–C97, and C91–C102. Residues Y43, G45, and G47 each contribute to the Ca(2+) site. Residue H63 is part of the active site. Position 64 (D64) interacts with Ca(2+). D105 is an active-site residue.

It belongs to the phospholipase A2 family. Group II subfamily. D49 sub-subfamily. Ca(2+) serves as cofactor. Expressed by the venom gland.

It is found in the secreted. The enzyme catalyses a 1,2-diacyl-sn-glycero-3-phosphocholine + H2O = a 1-acyl-sn-glycero-3-phosphocholine + a fatty acid + H(+). Snake venom phospholipase A2 (PLA2) that displays edema-inducing activities, exhibits indirect hemolytic activity, and inhibits ADP-induced platelet aggregation. PLA2 catalyzes the calcium-dependent hydrolysis of the 2-acyl groups in 3-sn-phosphoglycerides. In Protobothrops mucrosquamatus (Taiwan habu), this protein is Acidic phospholipase A2 2.